Here is a 358-residue protein sequence, read N- to C-terminus: Alanine racemase (358 aa).

K35 acts as the Proton acceptor; specific for D-alanine in catalysis. K35 is subject to N6-(pyridoxal phosphate)lysine. R130 provides a ligand contact to substrate. The active-site Proton acceptor; specific for L-alanine is the Y255. A substrate-binding site is contributed by M303.

It belongs to the alanine racemase family. Pyridoxal 5'-phosphate is required as a cofactor.

The catalysed reaction is L-alanine = D-alanine. Its pathway is amino-acid biosynthesis; D-alanine biosynthesis; D-alanine from L-alanine: step 1/1. Its function is as follows. Catalyzes the interconversion of L-alanine and D-alanine. May also act on other amino acids. This is Alanine racemase (alr) from Shewanella sp. (strain MR-4).